The chain runs to 263 residues: Neurovirulence factor ICP34.5 (263 aa).

Residues 1–14 (MARRRRHRGPRRPR) are compositionally biased toward basic residues. Residues 1–16 (MARRRRHRGPRRPRPP) form a required for nucleolar localization region. Disordered stretches follow at residues 1-128 (MARR…PFRL) and 149-190 (RRAG…PATP). The span at 24-35 (TAQSQVTSTPNS) shows a compositional bias: polar residues. The segment covering 45 to 58 (AAPPPPPASGPPPS) has biased composition (pro residues). Acidic residues predominate over residues 73–83 (ASDDDDDDDWP). Pro residues-rich tracts occupy residues 84 to 93 (DSPPPEPAPE) and 119 to 128 (SHPPSRPFRL). The Nuclear export signal motif lies at 128-137 (LPPRLALRLR). Tandem repeats lie at residues 161–163 (ATP), 164–166 (ATP), 167–169 (ATP), 170–172 (ATP), 173–175 (ATP), 176–178 (ATP), 179–181 (ATP), 182–184 (ATP), 185–187 (ATP), and 188–190 (ATP). The tract at residues 161–190 (ATPATPATPATPATPATPATPATPATPATP) is 10 X 3 AA tandem repeats of A-T-P. A compositionally biased stretch (low complexity) spans 164–190 (ATPATPATPATPATPATPATPATPATP). Positions 190–203 (PARVRFSPHVRVRH) are interaction with host PPP1CA. Residues 205–263 (VVWASAARLARRGSWARERADRARFRRRVAEAEAVIGPCLGPEARARALARGAGPANSV) form an important for interferon resistance region. The Bipartite nuclear localization signal signature appears at 215–233 (RRGSWARERADRARFRRRV). The interval 233 to 248 (VAEAEAVIGPCLGPEA) is interaction with host EIF2S1/EIF-2ALPHA.

Belongs to the PPP1R15 family. Interacts with host PPP1CA; this interaction to forms a high-molecular-weight complex that dephosphorylates EIF2S1/eIF-2alpha. Interacts with host EIF2S1/eIF-2alpha; this interaction is crucial for the specific dephosphorylation of EIF2S1/eIF-2alpha by PPP1CA. Binds to proliferating cell nuclear antigen (PCNA), which may release host cells from growth arrest and facilitate viral replication. Interacts (via N-terminus) with host C1QBP; this interaction allows C1QBP to be recruited to the inner nuclear membrane by ICP34.5. Interacts with host PRKCA. Interacts with protein UL31. Interacts with host STING/TMEM173; this interaction inhibits the intracellular DNA sensing pathway. Interacts with host BECN1; this interaction modulates host autophagy.

It is found in the host cytoplasm. The protein resides in the host nucleus. It localises to the host nucleolus. Its subcellular location is the virion. Its function is as follows. Inhibits the establishment of the immune response and of the integrated stress response (ISR) in the infected cell. Plays essential roles in viral nuclear egress to mediate capsid transit across the nuclear membrane. Facilitates nuclear egress cooperatively with host C1QBP and protein kinase C/PKC to induce lamin A/C phosphorylation and subsequent reorganization. In turn, lamina disassembles and nuclear egress occurs. Recruits the serine/threonine protein phosphatase PPP1CA/PP1-alpha to dephosphorylate the translation initiation factor EIF2S1/eIF-2alpha, thereby couteracting the host shutoff of protein synthesis involving double-stranded RNA-dependent protein kinase EIF2AK2/PKR. In turn, controls host IRF3 activation and subsequently inhibits host interferon response. Controls the DNA sensing pathway by interacting with and inhibiting host STING/TMEM173. Also down-modulates the host MHC class II proteins cell surface expression. Acts as a neurovirulence factor that has a profound effect on the growth of the virus in central nervous system tissue, by interacting with host BECN1 and thereby antagonizing the host autophagy response. In Human herpesvirus 1 (strain F) (HHV-1), this protein is Neurovirulence factor ICP34.5 (RL1).